The primary structure comprises 180 residues: Molybdopterin synthase catalytic subunit (180 aa).

Positions 1–10 are enriched in polar residues; that stretch reads MSSTTPTTEP. The tract at residues 1-31 is disordered; that stretch reads MSSTTPTTEPDQLPPHLDPQTYPRTTTNPTL. Over residues 21 to 31 the composition is skewed to low complexity; the sequence is TYPRTTTNPTL. Substrate contacts are provided by residues 131-132, Lys147, and 154-156; these read HR and KKE.

Belongs to the MoaE family. MOCS2B subfamily. As to quaternary structure, heterotetramer; composed of 2 small (MOCS2A) and 2 large (MOCS2B) subunits.

The protein resides in the cytoplasm. It carries out the reaction 2 [molybdopterin-synthase sulfur-carrier protein]-C-terminal-Gly-aminoethanethioate + cyclic pyranopterin phosphate + H2O = molybdopterin + 2 [molybdopterin-synthase sulfur-carrier protein]-C-terminal Gly-Gly + 2 H(+). The protein operates within cofactor biosynthesis; molybdopterin biosynthesis. In terms of biological role, catalytic subunit of the molybdopterin synthase complex, a complex that catalyzes the conversion of precursor Z into molybdopterin. Acts by mediating the incorporation of 2 sulfur atoms from thiocarboxylated MOCS2A into precursor Z to generate a dithiolene group. In Aspergillus niger (strain ATCC MYA-4892 / CBS 513.88 / FGSC A1513), this protein is Molybdopterin synthase catalytic subunit.